Reading from the N-terminus, the 478-residue chain is Zinc finger protein 410 (478 aa).

2 disordered regions span residues 84-113 and 187-214; these read PDGE…LQDL and NAKT…PLPQ. Residues 103–113 show a composition bias toward polar residues; the sequence is TPESPSLLQDL. 5 C2H2-type zinc fingers span residues 219–243, 249–273, 279–303, 309–333, and 339–362; these read LKCT…LKTH, FICP…MRTH, FMCH…RRIH, FLCE…LVVH, and HQCQ…RKHH. Residues cysteine 221, cysteine 226, histidine 239, histidine 243, cysteine 251, cysteine 256, histidine 269, histidine 273, cysteine 281, cysteine 286, histidine 299, histidine 303, cysteine 311, cysteine 316, histidine 329, histidine 333, cysteine 341, cysteine 344, histidine 357, and histidine 361 each contribute to the Zn(2+) site.

Interacts with CDKN2A/p14ARF. In terms of processing, O-glycosylated. O-GlcNAcylation may occur in response to increasing glucose levels and affect transcription factor activity. Sumoylated. Sumoylation increases its half-life, possibly by blocking ubiquitin-mediated degradation.

The protein localises to the nucleus. It localises to the chromosome. Transcription factor that binds to the sequence motif 5'-CATCCCATAATA-3', and is specifically required to silence expression of fetal hemoglobin in adult erythroid cells. Prevents expression of fetal hemoglobin genes HBG1 and HBG2 through CHD4: acts as a direct transcriptional activator of CHD4, a central component of the NuRD complex that represses transcription of fetal hemoglobin genes HBG1 and HBG2 in erythroid cells. May also activate transcription of matrix-remodeling genes such as MMP1 during fibroblast senescence. May activate transcription of the gap junction gene GJC1, perhaps in response to increasing glucose. However, recent studies suggest that ZNF410 is dedicated to regulate expression of a single gene: CHD4. This is Zinc finger protein 410 from Mus musculus (Mouse).